The sequence spans 251 residues: 3-deoxy-manno-octulosonate cytidylyltransferase (251 aa).

It belongs to the KdsB family.

The protein resides in the cytoplasm. The enzyme catalyses 3-deoxy-alpha-D-manno-oct-2-ulosonate + CTP = CMP-3-deoxy-beta-D-manno-octulosonate + diphosphate. It participates in nucleotide-sugar biosynthesis; CMP-3-deoxy-D-manno-octulosonate biosynthesis; CMP-3-deoxy-D-manno-octulosonate from 3-deoxy-D-manno-octulosonate and CTP: step 1/1. Its pathway is bacterial outer membrane biogenesis; lipopolysaccharide biosynthesis. Activates KDO (a required 8-carbon sugar) for incorporation into bacterial lipopolysaccharide in Gram-negative bacteria. In Alcanivorax borkumensis (strain ATCC 700651 / DSM 11573 / NCIMB 13689 / SK2), this protein is 3-deoxy-manno-octulosonate cytidylyltransferase.